A 305-amino-acid polypeptide reads, in one-letter code: Ferrochelatase (305 aa).

2 residues coordinate Fe cation: H182 and E262.

This sequence belongs to the ferrochelatase family.

It is found in the cytoplasm. It carries out the reaction heme b + 2 H(+) = protoporphyrin IX + Fe(2+). It participates in porphyrin-containing compound metabolism; protoheme biosynthesis; protoheme from protoporphyrin-IX: step 1/1. Functionally, catalyzes the ferrous insertion into protoporphyrin IX. This chain is Ferrochelatase, found in Herpetosiphon aurantiacus (strain ATCC 23779 / DSM 785 / 114-95).